Consider the following 145-residue polypeptide: uncharacterized protein (145 aa).

Residues 1-20 (MKTCTVICCTALVLGLTAYA) form the signal peptide.

This is an uncharacterized protein from Aedes vexans (Inland floodwater mosquito).